The sequence spans 87 residues: Olfactory receptor-like protein HbT2 (87 aa).

The Cytoplasmic segment spans residues 1-8 (KLWRMTGT). The chain crosses the membrane as a helical span at residues 9–29 (WLGGFCHSIIQIPVIIQLPFC). Over 30–55 (GPNVIDHYFRDLQPLFKLACTDTFME) the chain is Extracellular. A helical membrane pass occupies residues 56-76 (GVIVLAFSGLFSVFSFLILVS). Topologically, residues 77–87 (SYIVILVNLRN) are cytoplasmic.

The protein belongs to the G-protein coupled receptor 1 family.

Its subcellular location is the cell membrane. In terms of biological role, odorant receptor. This chain is Olfactory receptor-like protein HbT2, found in Apis mellifera ligustica (Common honeybee).